The primary structure comprises 311 residues: Taste receptor type 2 member 9 (311 aa).

At 1–9 (MPSTIEAIY) the chain is on the extracellular side. A helical transmembrane segment spans residues 10–32 (IILIAGELTIGIWGNGFIVLVNC). At 33-52 (IDWLKRRDVSLIDIILISLA) the chain is on the cytoplasmic side. The chain crosses the membrane as a helical span at residues 53–72 (ISRICLLCVISLDGFFILLF). Residues 73–86 (PGTYDTNVLESIMD) are Extracellular-facing. A helical transmembrane segment spans residues 87–109 (AVWTFANNSSLWFTSCLSIFYLL). At 110–128 (KIANISHPFFFWLKLKINK) the chain is on the cytoplasmic side. The helical transmembrane segment at 129–146 (VILAILLGSFLISLIISF) threads the bilayer. The Extracellular portion of the chain corresponds to 147–179 (PINGMWYNLFKVSHEENITWAFKVSTIPGAFKQ). N163 carries N-linked (GlcNAc...) asparagine glycosylation. Residues 180–202 (LTLNLGAMVPFILCLISFFLLLF) traverse the membrane as a helical segment. Over 203-233 (SLVRHTKQIQLHATGFRDPSTEAHMRAVKAV) the chain is Cytoplasmic. The chain crosses the membrane as a helical span at residues 234–256 (IIFLLLLILYYPVFLVMTSSTLI). Residues 257–260 (PQGK) lie on the Extracellular side of the membrane. The chain crosses the membrane as a helical span at residues 261–283 (LVLMIGDIVTVIFPSSHSFILIM). Residues 284–311 (GNSKLRAAFLKMLRFVKGFLRRRKPFVP) lie on the Cytoplasmic side of the membrane.

Belongs to the G-protein coupled receptor T2R family.

The protein resides in the membrane. Gustducin-coupled receptor implicated in the perception of bitter compounds in the oral cavity and the gastrointestinal tract. Signals through PLCB2 and the calcium-regulated cation channel TRPM5. The chain is Taste receptor type 2 member 9 (TAS2R9) from Macaca mulatta (Rhesus macaque).